Reading from the N-terminus, the 113-residue chain is Hydrogenase maturation factor HypA (113 aa).

Residue H2 coordinates Ni(2+). Positions 73, 76, 89, and 92 each coordinate Zn(2+).

Belongs to the HypA/HybF family.

Functionally, involved in the maturation of [NiFe] hydrogenases. Required for nickel insertion into the metal center of the hydrogenase. The sequence is that of Hydrogenase maturation factor HypA from Acidithiobacillus ferrooxidans (strain ATCC 23270 / DSM 14882 / CIP 104768 / NCIMB 8455) (Ferrobacillus ferrooxidans (strain ATCC 23270)).